The following is a 648-amino-acid chain: MTPLLELKDIRRSYPAGDEQVEVLKGISLDIYAGEMVAIVGASGSGKSTLMNILGCLDKATSGTYRVAGQDVATLDADALAQLRREHFGFIFQRYHLLSHLTAEQNVEVPAVYAGLERKQRLLRAQELLQRLGLEDRTEYYPAQLSGGQQQRVSIARALMNGGQVILADEPTGALDSHSGEEVMAILHQLRDRGHTVIIVTHDPQVAAQAERVIEIRDGEIVRNPPAIEKVNVTGGTEPVVNTVSGWRQFVSGFNEALTMAWRALAANKMRTLLTMLGIIIGIASVVSIVVVGDAAKQMVLADIRSIGTNTIDVYPGKDFGDDDPQYQQALKYDDLIAIQKQPWVASATPAVSQNLRLRYNNVDVAASANGVSGDYFNVYGMTFSEGNTFNQEQLNGRAQVVVLDSNTRRQLFPHKADVVGEVILVGNMPARVIGVAEEKQSMFGSSKVLRVWLPYSTMSGRVMGQSWLNSITVRVKEGFDSAEAEQQLTRLLSLRHGKKDFFTWNMDGVLKTVEKTTRTLQLFLTLVAVISLVVGGIGVMNIMLVSVTERTREIGIRMAVGARASDVLQQFLIEAVLVCLVGGALGITLSLLIAFTLQLFLPGWEIGFSPLALLLAFLCSTVTGILFGWLPARNAARLDPVDALARE.

Residues Met-1–Thr-272 are Cytoplasmic-facing. Residues Leu-5 to Thr-243 enclose the ABC transporter domain. Gly-41–Ser-48 serves as a coordination point for ATP. The chain crosses the membrane as a helical span at residues Leu-273 to Gly-293. Residues Asp-294 to Gln-522 are Periplasmic-facing. Residues Leu-523 to Ile-543 form a helical membrane-spanning segment. The Cytoplasmic portion of the chain corresponds to Met-544 to Glu-575. A helical transmembrane segment spans residues Ala-576–Phe-596. Over Thr-597 to Ser-610 the chain is Periplasmic. The helical transmembrane segment at Pro-611–Leu-631 threads the bilayer. Residues Pro-632 to Glu-648 are Cytoplasmic-facing.

Belongs to the ABC transporter superfamily. Macrolide exporter (TC 3.A.1.122) family. As to quaternary structure, homodimer. Part of the tripartite efflux system MacAB-TolC, which is composed of an inner membrane transporter, MacB, a periplasmic membrane fusion protein, MacA, and an outer membrane component, TolC. The complex forms a large protein conduit and can translocate molecules across both the inner and outer membranes. Interacts with MacA.

It localises to the cell inner membrane. ATPase activity is stimulated by interaction with MacA and inhibited by vanadate. Part of the tripartite efflux system MacAB-TolC. MacB is a non-canonical ABC transporter that contains transmembrane domains (TMD), which form a pore in the inner membrane, and an ATP-binding domain (NBD), which is responsible for energy generation. When overexpressed, the system confers resistance against macrolides composed of 14- and 15-membered lactones but no or weak resistance against 16-membered ones. In addition, the system could also transport R-LPS or a similar glycolipid. This is Macrolide export ATP-binding/permease protein MacB from Escherichia coli (strain K12).